Here is a 316-residue protein sequence, read N- to C-terminus: MYSKILGTGSYLPSQVRTNADLEKMVDTSDEWIVARTGIKERRIAAEDETVADMAFYAAENAIDMAGIDKNDIDLIIVATTSSSHTFPSSACQVQAKLGIKGCPAFDLAAACSGFVYALSVADQHIKSGMCKNVLVIGADALSKTCDPTDRSTIILFGDGAGAVVVGASQEPGIISTHIYADGQFGDLLSLPVPERGKDVDKWLHMAGNEVFKVAVTQLSKLVKDTLEANDMHKSELDWLVPHQANYRIISATAKKLSMSLDQVVVTLDRHGNTSAATVPTALDEAVRDGRIKRGQTLLLEAFGGGFTWGSALVKF.

Active-site residues include Cys-112 and His-243. The ACP-binding stretch occupies residues 244 to 248 (QANYR). Asn-273 is a catalytic residue.

The protein belongs to the thiolase-like superfamily. FabH family. As to quaternary structure, homodimer.

It localises to the cytoplasm. The enzyme catalyses malonyl-[ACP] + acetyl-CoA + H(+) = 3-oxobutanoyl-[ACP] + CO2 + CoA. Its pathway is lipid metabolism; fatty acid biosynthesis. Functionally, catalyzes the condensation reaction of fatty acid synthesis by the addition to an acyl acceptor of two carbons from malonyl-ACP. Catalyzes the first condensation reaction which initiates fatty acid synthesis and may therefore play a role in governing the total rate of fatty acid production. Possesses both acetoacetyl-ACP synthase and acetyl transacylase activities. Its substrate specificity determines the biosynthesis of branched-chain and/or straight-chain of fatty acids. This chain is Beta-ketoacyl-[acyl-carrier-protein] synthase III 1, found in Vibrio parahaemolyticus serotype O3:K6 (strain RIMD 2210633).